The chain runs to 573 residues: Splicing factor U2af large subunit A (573 aa).

Positions 1-175 (MSEFEDHEGN…KSKQRVSGFD (175 aa)) are disordered. Positions 22-93 (NGGRDGEIED…ERSRDKDRDH (72 aa)) are enriched in basic and acidic residues. Positions 94 to 105 (RERHHRSSRHRD) are enriched in basic residues. A compositionally biased stretch (basic and acidic residues) spans 106–141 (HSRERGERRERGGRDDDDYRRSRDRDHDRRRDDRGG). Residues 159–169 (TRSRSPSKSKQ) are compositionally biased toward basic residues. RRM domains follow at residues 239 to 322 (RRVY…RPSD), 359 to 437 (DRIF…RANQ), and 478 to 564 (QVVT…YPED).

The protein belongs to the splicing factor SR family. As to quaternary structure, component of the spliceosome. Interacts with SUA. Interacts with SF1 in the nucleus.

It is found in the nucleus. Its function is as follows. Necessary for the splicing of pre-mRNA. This Arabidopsis thaliana (Mouse-ear cress) protein is Splicing factor U2af large subunit A.